Consider the following 157-residue polypeptide: Endoribonuclease YbeY (157 aa).

The Zn(2+) site is built by His-114, His-118, and His-124.

Belongs to the endoribonuclease YbeY family. Zn(2+) serves as cofactor.

Its subcellular location is the cytoplasm. Functionally, single strand-specific metallo-endoribonuclease involved in late-stage 70S ribosome quality control and in maturation of the 3' terminus of the 16S rRNA. In Edwardsiella ictaluri (strain 93-146), this protein is Endoribonuclease YbeY.